The primary structure comprises 343 residues: 4-hydroxy-2-oxovalerate aldolase 2 (343 aa).

One can recognise a Pyruvate carboxyltransferase domain in the interval Ile-5 to Ile-255. Substrate contacts are provided by residues Arg-13 to Asp-14, Ser-167, and His-194. Position 14 (Asp-14) interacts with Mn(2+). The Mn(2+) site is built by His-194 and His-196. Tyr-285 is a substrate binding site.

Belongs to the 4-hydroxy-2-oxovalerate aldolase family.

The catalysed reaction is (S)-4-hydroxy-2-oxopentanoate = acetaldehyde + pyruvate. The protein is 4-hydroxy-2-oxovalerate aldolase 2 of Rhodococcus jostii (strain RHA1).